The chain runs to 178 residues: Cytochrome b6-f complex iron-sulfur subunit (178 aa).

The helical transmembrane segment at 20–42 (LLTFGTATGVALGALYPVANYFM) threads the bilayer. A Rieske domain is found at 71–161 (NHPAGDRSLV…IDVEDDKVFV (91 aa)). Residues C107, H109, C125, and H128 each coordinate [2Fe-2S] cluster. C112 and C127 are oxidised to a cystine.

It belongs to the Rieske iron-sulfur protein family. The 4 large subunits of the cytochrome b6-f complex are cytochrome b6, subunit IV (17 kDa polypeptide, PetD), cytochrome f and the Rieske protein, while the 4 small subunits are PetG, PetL, PetM and PetN. The complex functions as a dimer. It depends on [2Fe-2S] cluster as a cofactor.

It is found in the cellular thylakoid membrane. The catalysed reaction is 2 oxidized [plastocyanin] + a plastoquinol + 2 H(+)(in) = 2 reduced [plastocyanin] + a plastoquinone + 4 H(+)(out). Component of the cytochrome b6-f complex, which mediates electron transfer between photosystem II (PSII) and photosystem I (PSI), cyclic electron flow around PSI, and state transitions. This is Cytochrome b6-f complex iron-sulfur subunit from Prochlorococcus marinus (strain MIT 9211).